We begin with the raw amino-acid sequence, 1196 residues long: Phosphatidylinositol-3,5-bisphosphate 3-phosphatase MTMR3 (1196 aa).

At Ser8 the chain carries Phosphoserine. Residues Glu155 to Tyr576 enclose the Myotubularin phosphatase domain. A 1,2-diacyl-sn-glycero-3-phospho-(1D-myo-inositol-3,5-bisphosphate) is bound by residues Asn326, Asn351, and Ile352. 3 residues coordinate a 1,2-diacyl-sn-glycero-3-phospho-(1D-myo-inositol-3-phosphate): Asn326, Asn351, and Ile352. Cys413 acts as the Phosphocysteine intermediate in catalysis. Positions 414, 415, 416, 417, 418, 419, 455, and 459 each coordinate a 1,2-diacyl-sn-glycero-3-phospho-(1D-myo-inositol-3,5-bisphosphate). A 1,2-diacyl-sn-glycero-3-phospho-(1D-myo-inositol-3-phosphate) contacts are provided by Ser414, Asp415, Gly416, Trp417, Asp418, and Arg419. Arg459 provides a ligand contact to a 1,2-diacyl-sn-glycero-3-phospho-(1D-myo-inositol-3-phosphate). The disordered stretch occupies residues Asp587–Arg612. Pro residues predominate over residues Tyr593 to Pro603. Ser613, Ser633, Ser647, and Ser651 each carry phosphoserine. Disordered regions lie at residues Thr697 to Glu719 and Glu855 to Ser900. The residue at position 907 (Ser907) is a Phosphoserine. Residues Asn993 to Pro1008 show a composition bias toward polar residues. The tract at residues Asn993–Pro1019 is disordered. Positions Gln1027–Thr1060 form a coiled coil. Ser1062 carries the phosphoserine modification. An FYVE-type zinc finger spans residues Asp1117 to His1177. Zn(2+) contacts are provided by Cys1123, Cys1126, Cys1139, Cys1142, Cys1147, Cys1150, Cys1169, and Cys1172.

Belongs to the protein-tyrosine phosphatase family. Non-receptor class myotubularin subfamily. In terms of assembly, forms heterodimers with MTMR4 that recruit both CEP55 and PLK1; occurs during early mitosis, regulates the phosphorylation of CEP55 by PLK1 and its recruitment to the midbody where it mediates cell abscission.

It localises to the cytoplasm. The protein localises to the cytosol. It is found in the membrane. The catalysed reaction is a 1,2-diacyl-sn-glycero-3-phospho-(1D-myo-inositol-3,5-bisphosphate) + H2O = a 1,2-diacyl-sn-glycero-3-phospho-(1D-myo-inositol-5-phosphate) + phosphate. The enzyme catalyses a 1,2-diacyl-sn-glycero-3-phospho-(1D-myo-inositol-3-phosphate) + H2O = a 1,2-diacyl-sn-glycero-3-phospho-(1D-myo-inositol) + phosphate. It carries out the reaction 1,2-dihexadecanoyl-sn-glycero-3-phospho-(1D-myo-inositol-3-phosphate) + H2O = 1,2-dihexadecanoyl-sn-glycero-3-phospho-(1D-myo-inositol) + phosphate. It catalyses the reaction 1,2-dioctanoyl-sn-glycero-3-phospho-(1-D-myo-inositol-3-phosphate) + H2O = 1,2-dioctanoyl-sn-glycero-3-phospho-(1D-myo-inositol) + phosphate. The catalysed reaction is 1,2-dihexadecanoyl-sn-glycero-3-phospho-(1D-myo-inositol-3,5-phosphate) + H2O = 1,2-dihexadecanoyl-sn-glycero-3-phospho-(1D-myo-inositol-5-phosphate) + phosphate. Its function is as follows. Lipid phosphatase that specifically dephosphorylates the D-3 position of phosphatidylinositol 3-phosphate and phosphatidylinositol 3,5-bisphosphate, generating phosphatidylinositol and phosphatidylinositol 5-phosphate. Decreases the levels of phosphatidylinositol 3-phosphate, a phospholipid found in cell membranes where it acts as key regulator of both cell signaling and intracellular membrane traffic. Could also have a molecular sequestering/adapter activity and regulate biological processes independently of its phosphatase activity. It includes the regulation of midbody abscission during mitotic cytokinesis. The polypeptide is Phosphatidylinositol-3,5-bisphosphate 3-phosphatase MTMR3 (Mus musculus (Mouse)).